We begin with the raw amino-acid sequence, 177 residues long: Large ribosomal subunit protein uL6 (177 aa).

It belongs to the universal ribosomal protein uL6 family. As to quaternary structure, part of the 50S ribosomal subunit.

Functionally, this protein binds to the 23S rRNA, and is important in its secondary structure. It is located near the subunit interface in the base of the L7/L12 stalk, and near the tRNA binding site of the peptidyltransferase center. The protein is Large ribosomal subunit protein uL6 of Rhodopseudomonas palustris (strain BisB5).